The sequence spans 159 residues: Phosphopantetheine adenylyltransferase (159 aa).

Residue Thr10 coordinates substrate. Residues 10–11 and His18 contribute to the ATP site; that span reads TF. Positions 42, 74, and 88 each coordinate substrate. Residues 89 to 91, Glu99, and 124 to 130 contribute to the ATP site; these read GLR and NAFISSS.

It belongs to the bacterial CoaD family. As to quaternary structure, homohexamer. The cofactor is Mg(2+).

The protein resides in the cytoplasm. It carries out the reaction (R)-4'-phosphopantetheine + ATP + H(+) = 3'-dephospho-CoA + diphosphate. It participates in cofactor biosynthesis; coenzyme A biosynthesis; CoA from (R)-pantothenate: step 4/5. Reversibly transfers an adenylyl group from ATP to 4'-phosphopantetheine, yielding dephospho-CoA (dPCoA) and pyrophosphate. This chain is Phosphopantetheine adenylyltransferase, found in Campylobacter fetus subsp. fetus (strain 82-40).